The sequence spans 339 residues: 4-dimethylallyltryptophan N-methyltransferase easF (339 aa).

The protein belongs to the methyltransferase superfamily. In terms of assembly, homodimer.

It catalyses the reaction 4-(3-methylbut-2-enyl)-L-tryptophan + S-adenosyl-L-methionine = 4-(3-methylbut-2-enyl)-L-abrine + S-adenosyl-L-homocysteine + H(+). It participates in alkaloid biosynthesis; ergot alkaloid biosynthesis. In terms of biological role, 4-dimethylallyltryptophan N-methyltransferase; part of the gene cluster that mediates the biosynthesis of fumiclavanine C, a fungal ergot alkaloid. DmaW catalyzes the first step of ergot alkaloid biosynthesis by condensing dimethylallyl diphosphate (DMAP) and tryptophan to form 4-dimethylallyl-L-tryptophan. The second step is catalyzed by the methyltransferase easF that methylates 4-dimethylallyl-L-tryptophan in the presence of S-adenosyl-L-methionine, resulting in the formation of 4-dimethylallyl-L-abrine. The catalase easC and the FAD-dependent oxidoreductase easE then transform 4-dimethylallyl-L-abrine to chanoclavine-I which is further oxidized by EasD in the presence of NAD(+), resulting in the formation of chanoclavine-I aldehyde. EasA reduces chanoclavine-I aldehyde to dihydrochanoclavine-I aldehyde that spontaneously dehydrates to form 6,8-dimethyl-6,7-didehydroergoline. EasG then catalyzes the reduction of 6,8-dimethyl-6,7-didehydroergoline to form festuclavine. Hydrolysis of festuclavine by easM then leads to the formation of fumigaclavine B which is in turn acetylated by easN to fumigaclavine A. Finally, easL catalyzes the conversion of fumigaclavine A into fumigaclavine C by attaching a dimethylallyl moiety to C-2 of the indole nucleus. The polypeptide is 4-dimethylallyltryptophan N-methyltransferase easF (Aspergillus fumigatus (strain ATCC MYA-4609 / CBS 101355 / FGSC A1100 / Af293) (Neosartorya fumigata)).